The following is a 553-amino-acid chain: Protein Early 65 kDa (553 aa).

The protein resides in the host cytoplasm. Its function is as follows. May participate in the recruitment of G-actin to the host nucleus. The protein is Protein Early 65 kDa (HE65) of Autographa californica nuclear polyhedrosis virus (AcMNPV).